The chain runs to 91 residues: Probable Fe(2+)-trafficking protein (91 aa).

It belongs to the Fe(2+)-trafficking protein family.

Its function is as follows. Could be a mediator in iron transactions between iron acquisition and iron-requiring processes, such as synthesis and/or repair of Fe-S clusters in biosynthetic enzymes. The polypeptide is Probable Fe(2+)-trafficking protein (Cupriavidus metallidurans (strain ATCC 43123 / DSM 2839 / NBRC 102507 / CH34) (Ralstonia metallidurans)).